The chain runs to 185 residues: Adenine phosphoribosyltransferase (185 aa).

It belongs to the purine/pyrimidine phosphoribosyltransferase family. In terms of assembly, homodimer.

It localises to the cytoplasm. The enzyme catalyses AMP + diphosphate = 5-phospho-alpha-D-ribose 1-diphosphate + adenine. Its pathway is purine metabolism; AMP biosynthesis via salvage pathway; AMP from adenine: step 1/1. Its function is as follows. Catalyzes a salvage reaction resulting in the formation of AMP, that is energically less costly than de novo synthesis. The polypeptide is Adenine phosphoribosyltransferase (Shewanella denitrificans (strain OS217 / ATCC BAA-1090 / DSM 15013)).